We begin with the raw amino-acid sequence, 381 residues long: Queuine tRNA-ribosyltransferase (381 aa).

Asp96 (proton acceptor) is an active-site residue. Substrate is bound by residues 96-100 (DSGGF), Asp150, Gln193, and Gly220. The RNA binding stretch occupies residues 251-257 (GVGSPDS). Asp270 (nucleophile) is an active-site residue. Residues 275–279 (TRIAR) form an RNA binding; important for wobble base 34 recognition region. Zn(2+) contacts are provided by Cys308, Cys310, Cys313, and His339.

Belongs to the queuine tRNA-ribosyltransferase family. In terms of assembly, homodimer. Within each dimer, one monomer is responsible for RNA recognition and catalysis, while the other monomer binds to the replacement base PreQ1. The cofactor is Zn(2+).

The catalysed reaction is 7-aminomethyl-7-carbaguanine + guanosine(34) in tRNA = 7-aminomethyl-7-carbaguanosine(34) in tRNA + guanine. Its pathway is tRNA modification; tRNA-queuosine biosynthesis. Its function is as follows. Catalyzes the base-exchange of a guanine (G) residue with the queuine precursor 7-aminomethyl-7-deazaguanine (PreQ1) at position 34 (anticodon wobble position) in tRNAs with GU(N) anticodons (tRNA-Asp, -Asn, -His and -Tyr). Catalysis occurs through a double-displacement mechanism. The nucleophile active site attacks the C1' of nucleotide 34 to detach the guanine base from the RNA, forming a covalent enzyme-RNA intermediate. The proton acceptor active site deprotonates the incoming PreQ1, allowing a nucleophilic attack on the C1' of the ribose to form the product. After dissociation, two additional enzymatic reactions on the tRNA convert PreQ1 to queuine (Q), resulting in the hypermodified nucleoside queuosine (7-(((4,5-cis-dihydroxy-2-cyclopenten-1-yl)amino)methyl)-7-deazaguanosine). In Bacillus licheniformis (strain ATCC 14580 / DSM 13 / JCM 2505 / CCUG 7422 / NBRC 12200 / NCIMB 9375 / NCTC 10341 / NRRL NRS-1264 / Gibson 46), this protein is Queuine tRNA-ribosyltransferase.